Here is a 227-residue protein sequence, read N- to C-terminus: tRNA (guanine-N(7)-)-methyltransferase (227 aa).

S-adenosyl-L-methionine is bound by residues glutamate 57, glutamate 82, aspartate 109, and aspartate 132. Aspartate 132 is a catalytic residue. Substrate-binding positions include lysine 136, aspartate 168, and 205–208; that span reads TKFE.

The protein belongs to the class I-like SAM-binding methyltransferase superfamily. TrmB family.

It catalyses the reaction guanosine(46) in tRNA + S-adenosyl-L-methionine = N(7)-methylguanosine(46) in tRNA + S-adenosyl-L-homocysteine. It functions in the pathway tRNA modification; N(7)-methylguanine-tRNA biosynthesis. Functionally, catalyzes the formation of N(7)-methylguanine at position 46 (m7G46) in tRNA. In Leifsonia xyli subsp. xyli (strain CTCB07), this protein is tRNA (guanine-N(7)-)-methyltransferase.